The following is a 412-amino-acid chain: MEEEHEEESHLSQSDTVGSAIVEDGPGKEYEIYIKNEELVDKLKLLNYEDGFLKLGVVYKPILKHYFVKSKNVGEQFFLFTSLAAWLIKKSGDESYNMPQEFDDPNSTLANIMAAAKNKGIATDFTAAKLKSGAGENVIFILNSLADASLVHVGFQWQKMIPPKEEDEDTAVDEQDEDDDNDDIVEEPMNFLDDDDDDNVIEIDLKAQGLATESKNPLQSVLQSNTDAITWKQEVERVAPQLKITLKQDAKDWRLHLEQMNSMHKNVEQKVGNVGPYLDNMSKDIAKALERIASREKSLNSQLASMMSKFRRATDTRAELREKYKAASVGVSSRTETLDRISDDIEQLKQQIEEQGAKSSDGAPLVKIKQAVSKLEEELQTMNVQIGVFEQSILNTYLRDHFNFSANLLNIM.

Disordered regions lie at residues 1–21 and 162–193; these read MEEE…GSAI and PPKE…NFLD. A compositionally biased stretch (acidic residues) spans 165–193; that stretch reads EEDEDTAVDEQDEDDDNDDIVEEPMNFLD. A coiled-coil region spans residues 302-393; the sequence is QLASMMSKFR…VQIGVFEQSI (92 aa).

The protein belongs to the IFT57 family. As to quaternary structure, component of the IFT complex B composed of at least che-2, che-13, dyf-1, dyf-3, dyf-6, dyf-11, dyf-13, ift-20, ift-74, ift-81, ifta-2, osm-1, osm-5 and osm-6.

It is found in the cytoplasm. It localises to the cytoskeleton. The protein localises to the cilium axoneme. Functionally, component of the intraflagellar transport (IFT) complex B required for transport of proteins in the motile cilium. May be required for ciliary entrance and transport of specific ciliary cargo proteins such as che-3 which are related to motility. Required for the formation of chemosensory cilia that detect chemosensory cues. In Caenorhabditis elegans, this protein is Intraflagellar transport protein che-13.